The primary structure comprises 263 residues: 3-methyl-2-oxobutanoate hydroxymethyltransferase (263 aa).

Mg(2+) is bound by residues aspartate 44 and aspartate 83. 3-methyl-2-oxobutanoate-binding positions include 44–45 (DS), aspartate 83, and lysine 112. Glutamate 114 is a Mg(2+) binding site. Residue glutamate 181 is the Proton acceptor of the active site.

Belongs to the PanB family. Homodecamer; pentamer of dimers. The cofactor is Mg(2+).

It localises to the cytoplasm. It catalyses the reaction 3-methyl-2-oxobutanoate + (6R)-5,10-methylene-5,6,7,8-tetrahydrofolate + H2O = 2-dehydropantoate + (6S)-5,6,7,8-tetrahydrofolate. It participates in cofactor biosynthesis; (R)-pantothenate biosynthesis; (R)-pantoate from 3-methyl-2-oxobutanoate: step 1/2. Functionally, catalyzes the reversible reaction in which hydroxymethyl group from 5,10-methylenetetrahydrofolate is transferred onto alpha-ketoisovalerate to form ketopantoate. This is 3-methyl-2-oxobutanoate hydroxymethyltransferase from Sulfurimonas denitrificans (strain ATCC 33889 / DSM 1251) (Thiomicrospira denitrificans (strain ATCC 33889 / DSM 1251)).